The following is a 777-amino-acid chain: Histone-lysine N-methyltransferase set9 (777 aa).

The region spanning 117 to 231 is the SET domain; that stretch reads CPFEVNATNR…VGEEITVTYS (115 aa). 2 disordered regions span residues 263-414 and 682-718; these read AVQK…ILSP and RMGSKGKQGSSAPSTKGTPAGEKNEQSAKQEQSQGQY. Polar residues predominate over residues 291–301; sequence TALQASRTPSV. The segment covering 323-337 has biased composition (low complexity); the sequence is TSTTDSAAQGAGADG. 2 stretches are compositionally biased toward polar residues: residues 371–405 and 688–698; these read TAPSRGSSDNETSKSPLSFSTTNDNVTDATSQGSE and KQGSSAPSTKG.

The protein belongs to the class V-like SAM-binding methyltransferase superfamily. Histone-lysine methyltransferase family. Suvar4-20 subfamily.

It is found in the nucleus. The protein localises to the chromosome. It carries out the reaction L-lysyl(20)-[histone H4] + 3 S-adenosyl-L-methionine = N(6),N(6),N(6)-trimethyl-L-lysyl(20)-[histone H4] + 3 S-adenosyl-L-homocysteine + 3 H(+). Its function is as follows. Histone methyltransferase that trimethylates 'Lys-20' of histone H4 to form H4K20me3. This Neurospora crassa (strain ATCC 24698 / 74-OR23-1A / CBS 708.71 / DSM 1257 / FGSC 987) protein is Histone-lysine N-methyltransferase set9 (hlm-1).